Reading from the N-terminus, the 529-residue chain is Beta-hexosaminidase subunit alpha (529 aa).

The signal sequence occupies residues 1-22 (MASSRLWFSLLLAAALAGRATA). Positions 23-88 (LWPWPQNIQT…PRPYLTGKRH (66 aa)) are excised as a propeptide. Cysteines 58 and 104 form a disulfide. Residues Asn115, Asn157, and Asn295 are each glycosylated (N-linked (GlcNAc...) asparagine). Cys277 and Cys328 are joined by a disulfide. The active-site Proton donor is Glu323. A critical for hydrolysis GM2 gangliosides region spans residues 423-424 (NR). A disulfide bond links Cys505 and Cys522.

It belongs to the glycosyl hydrolase 20 family. There are 3 beta-hexosaminidase isozymes: isozyme A (hexosaminidase A) is a heterodimer composed of one subunit alpha and one subunit beta (chain A and B); isozyme B (hexosaminidase B) is a homodimer of two beta subunits (two chains A and B); isozyme S (hexosaminidase S) is a homodimer of two alpha subunits. The composition of the dimer (isozyme A versus isozyme S) has a significant effect on the substrate specificity of the alpha subunit active site.

Its subcellular location is the lysosome. The enzyme catalyses Hydrolysis of terminal non-reducing N-acetyl-D-hexosamine residues in N-acetyl-beta-D-hexosaminides.. It carries out the reaction N-acetyl-beta-D-galactosaminyl-(1-&gt;4)-beta-D-3-sulfogalactosyl-(1-&gt;4)-beta-D-glucosyl-(1&lt;-&gt;1')-ceramide + H2O = a beta-D-3-sulfogalactosyl-(1-&gt;4)-beta-D-glucosyl-(1&lt;-&gt;1')-ceramide + N-acetyl-beta-D-galactosamine. The catalysed reaction is a ganglioside GM2 (d18:1(4E)) + H2O = a ganglioside GM3 (d18:1(4E)) + N-acetyl-beta-D-galactosamine. It catalyses the reaction a ganglioside GM2 + H2O = a ganglioside GM3 + N-acetyl-beta-D-galactosamine. The enzyme catalyses beta-D-GalNAc-(1-&gt;4)-alpha-L-IdoA-(1-&gt;3)-beta-D-GalNAc-4-sulfate-(1-&gt;4)-alpha-L-IdoA-(1-&gt;3)-D-GalNAc-4-sulfate + H2O = alpha-L-IdoA-(1-&gt;3)-beta-D-GalNAc-4-sulfate-(1-&gt;4)-alpha-L-IdoA-(1-&gt;3)-D-GalNAc-4-sulfate + N-acetyl-D-galactosamine. It carries out the reaction N-acetyl-beta-D-6-sulfogalactosaminyl-(1-&gt;4)-alpha-L-iduronyl-(1-&gt;3)-N-acetyl-D-6-sulfogalactosamine + H2O = alpha-L-iduronyl-(1-&gt;3)-N-acetyl-D-6-sulfogalactosamine + N-acetyl-D-6-sulfogalactosamine. With respect to regulation, addition of GM2A stimulates the hydrolysis of sulfated glycosphingolipid SM2 and the ganglioside GM2. Its function is as follows. Hydrolyzes the non-reducing end N-acetyl-D-hexosamine and/or sulfated N-acetyl-D-hexosamine of glycoconjugates, such as the oligosaccharide moieties from proteins and neutral glycolipids, or from certain mucopolysaccharides. The isozyme S is as active as the isozyme A on the anionic bis-sulfated glycans, the chondroitin-6-sulfate trisaccharide (C6S-3), and the dermatan sulfate pentasaccharide, and the sulfated glycosphingolipid SM2. The isozyme B does not hydrolyze each of these substrates, however hydrolyzes efficiently neutral oligosaccharide. Only the isozyme A is responsible for the degradation of GM2 gangliosides in the presence of GM2A. The protein is Beta-hexosaminidase subunit alpha of Pongo abelii (Sumatran orangutan).